A 438-amino-acid polypeptide reads, in one-letter code: Cysteine--tRNA ligase (438 aa).

Position 28 (Cys28) interacts with Zn(2+). The 'HIGH' region motif lies at 30 to 40 (PTVYNHLHLGN). Zn(2+)-binding residues include Cys207, His232, and Glu236. The 'KMSKS' region signature appears at 264 to 268 (KMSKS). Lys267 provides a ligand contact to ATP.

The protein belongs to the class-I aminoacyl-tRNA synthetase family. In terms of assembly, monomer. Requires Zn(2+) as cofactor.

The protein resides in the cytoplasm. The enzyme catalyses tRNA(Cys) + L-cysteine + ATP = L-cysteinyl-tRNA(Cys) + AMP + diphosphate. This is Cysteine--tRNA ligase from Aster yellows witches'-broom phytoplasma (strain AYWB).